A 622-amino-acid polypeptide reads, in one-letter code: Chaperone protein HscA homolog (622 aa).

It belongs to the heat shock protein 70 family.

In terms of biological role, chaperone involved in the maturation of iron-sulfur cluster-containing proteins. Has a low intrinsic ATPase activity which is markedly stimulated by HscB. In Burkholderia thailandensis (strain ATCC 700388 / DSM 13276 / CCUG 48851 / CIP 106301 / E264), this protein is Chaperone protein HscA homolog.